The following is a 365-amino-acid chain: Histidinol-phosphate aminotransferase (365 aa).

The residue at position 223 (Lys-223) is an N6-(pyridoxal phosphate)lysine.

Belongs to the class-II pyridoxal-phosphate-dependent aminotransferase family. Histidinol-phosphate aminotransferase subfamily. As to quaternary structure, homodimer. Requires pyridoxal 5'-phosphate as cofactor.

The enzyme catalyses L-histidinol phosphate + 2-oxoglutarate = 3-(imidazol-4-yl)-2-oxopropyl phosphate + L-glutamate. It participates in amino-acid biosynthesis; L-histidine biosynthesis; L-histidine from 5-phospho-alpha-D-ribose 1-diphosphate: step 7/9. The protein is Histidinol-phosphate aminotransferase of Bacillus pumilus (strain SAFR-032).